Here is a 172-residue protein sequence, read N- to C-terminus: L-amino acid oxidase (172 aa).

44-47 is a binding site for FAD; the sequence is GPMR. Positions 47 and 103 each coordinate substrate.

This sequence belongs to the flavin monoamine oxidase family. FIG1 subfamily. In terms of assembly, heterodimer; non-covalently linked. FAD is required as a cofactor. Post-translationally, N-glycosylated. In terms of tissue distribution, expressed by the venom gland.

It localises to the secreted. The enzyme catalyses an L-alpha-amino acid + O2 + H2O = a 2-oxocarboxylate + H2O2 + NH4(+). It catalyses the reaction L-leucine + O2 + H2O = 4-methyl-2-oxopentanoate + H2O2 + NH4(+). The catalysed reaction is L-phenylalanine + O2 + H2O = 3-phenylpyruvate + H2O2 + NH4(+). It carries out the reaction L-tryptophan + O2 + H2O = indole-3-pyruvate + H2O2 + NH4(+). The enzyme catalyses L-methionine + O2 + H2O = 4-methylsulfanyl-2-oxobutanoate + H2O2 + NH4(+). It catalyses the reaction L-isoleucine + O2 + H2O = (S)-3-methyl-2-oxopentanoate + H2O2 + NH4(+). The catalysed reaction is L-arginine + O2 + H2O = 5-guanidino-2-oxopentanoate + H2O2 + NH4(+). It carries out the reaction L-tyrosine + O2 + H2O = 3-(4-hydroxyphenyl)pyruvate + H2O2 + NH4(+). Its activity is regulated as follows. Activity is increased by Mn(2+) ions. Inhibited by Zn(2+), Ni(2+), Co(2+), Cu(2+) and Al(3+). No significant activity change by Na(+), K(+), Ca(2+), Mg(2+) and Ba(2+) ions. Both isoform are completely inhibited by L-Cys and reduced glutathione. O-phenanthroline, beta-mercaptoethanol and PMSF completely inhibit the enzymatic activity of LAAOII, but have no activity on LAAOI. Iodoacetic acid inhibits the enzymatic activity of LAAOII by 46% but has no effect on the LAAOI activity. Catalyzes an oxidative deamination of predominantly hydrophobic and aromatic L-amino acids, thus producing hydrogen peroxide that may contribute to the diverse toxic effects of this enzyme. Shows high specificity for L-Arg, L-Met, L-Phe, L-Leu, L-Tyr, L-Ile and L-Trp, low specificity for L-Val, L-Ala, L-Asn, L-Gln, and no specificity for L-Pro, L-Ser, L-Thr, L-Cys, L-Gly and L-Asp. Exhibits diverse biological activities, such as hemorrhage, hemolysis, edema, antibacterial and antiparasitic activities, as well as regulation of platelet aggregation. Its effect on platelets is controversial, since it either induces aggregation or inhibits agonist-induced aggregation. These different effects are probably due to different experimental conditions. The protein is L-amino acid oxidase of Cerastes cerastes (Horned desert viper).